The primary structure comprises 396 residues: Proteasome-activating nucleotidase (396 aa).

The stretch at 16–57 (ITYLKRRIRQLELQVRMLEADKERLERELSRLRSEMSRLRQP) forms a coiled coil. Residues 181 to 186 (GCGKTL) and His320 contribute to the ATP site. Residues 394–396 (IYG) are docks into pockets in the proteasome alpha-ring to cause gate opening.

Belongs to the AAA ATPase family. In terms of assembly, homohexamer. The hexameric complex has a two-ring architecture resembling a top hat that caps the 20S proteasome core at one or both ends. Upon ATP-binding, the C-terminus of PAN interacts with the alpha-rings of the proteasome core by binding to the intersubunit pockets.

The protein resides in the cytoplasm. Its function is as follows. ATPase which is responsible for recognizing, binding, unfolding and translocation of substrate proteins into the archaeal 20S proteasome core particle. Is essential for opening the gate of the 20S proteasome via an interaction with its C-terminus, thereby allowing substrate entry and access to the site of proteolysis. Thus, the C-termini of the proteasomal ATPase function like a 'key in a lock' to induce gate opening and therefore regulate proteolysis. Unfolding activity requires energy from ATP hydrolysis, whereas ATP binding alone promotes ATPase-20S proteasome association which triggers gate opening, and supports translocation of unfolded substrates. The sequence is that of Proteasome-activating nucleotidase from Pyrococcus abyssi (strain GE5 / Orsay).